Consider the following 194-residue polypeptide: UPF0301 protein BT_0659 (194 aa).

Belongs to the UPF0301 (AlgH) family.

The polypeptide is UPF0301 protein BT_0659 (Bartonella tribocorum (strain CIP 105476 / IBS 506)).